The following is a 521-amino-acid chain: Ribonuclease Y (521 aa).

Residues 5–25 (LLLILTAVIMLIVGFAVGAIL) form a helical membrane-spanning segment. A disordered region spans residues 77 to 107 (ELKDRRGEVQKQENRLIQREETMDRKDATLD). The KH domain maps to 211–271 (TVTVVTLPND…IRREIARMTL (61 aa)). The region spanning 337–430 (VLNHSIEVAK…VAASDAISAA (94 aa)) is the HD domain.

Belongs to the RNase Y family.

The protein localises to the cell membrane. Its function is as follows. Endoribonuclease that initiates mRNA decay. This chain is Ribonuclease Y, found in Latilactobacillus sakei subsp. sakei (strain 23K) (Lactobacillus sakei subsp. sakei).